Reading from the N-terminus, the 599-residue chain is Sodium-dependent phosphate transport protein 2C (599 aa).

Residues 1-76 (MPSSLPGSQV…RRVAGSVLKA (76 aa)) are Cytoplasmic-facing. Phosphoserine is present on Ser4. Residues 77–97 (CGLLGSLYFFICSLDVLSSAF) form a helical membrane-spanning segment. The Extracellular portion of the chain corresponds to 98–111 (QLLGSKVAGDIFKD). A helical membrane pass occupies residues 112 to 132 (NVVLSNPVAGLVIGVLVTALV). At 133 to 188 (QSSSTSSSIVVSMVAAKLLTVRVSVPIIMGVNVGTSITSTLVSMAQSGDRDEFQRA) the chain is on the cytoplasmic side. Residues 189-209 (FSGSAVHGIFNWLTVLVLLPL) traverse the membrane as a helical segment. Residues 210–322 (ESATALLERL…FAGTELTDLA (113 aa)) lie on the Extracellular side of the membrane. N-linked (GlcNAc...) asparagine glycans are attached at residues Asn265, Asn268, Asn286, and Asn299. The cysteines at positions 276 and 309 are disulfide-linked. Residues 323-343 (VGCILLAGSLLVLCGCLVLIV) traverse the membrane as a helical segment. At 344–367 (KLLNSVLRGRVAQVVRTVINADFP) the chain is on the cytoplasmic side. Residues 368-388 (FPLGWLGGYLAVLAGAGLTFA) form a helical membrane-spanning segment. Residues 389–445 (LQSSSVFTAAVVPLMGVGVISLDRAYPLLLGSNIGTTTTALLAALASPADRMLSALQ) lie on the Extracellular side of the membrane. Residues 446–466 (VALIHFFFNLAGILLWYLVPA) form a helical membrane-spanning segment. The Cytoplasmic segment spans residues 467 to 485 (LRLPIPLARHFGVVTARYR). The chain crosses the membrane as a helical span at residues 486 to 506 (WVAGVYLLLGFLLLPLAAFGL). Topologically, residues 507–510 (SLAG) are extracellular. A helical transmembrane segment spans residues 511–531 (GMELAAVGGPLVGLVLLVILV). The Cytoplasmic portion of the chain corresponds to 532-599 (TVLQRRRPAW…NPEILASQQL (68 aa)).

This sequence belongs to the SLC34A transporter family. As to expression, expressed only in the kidney.

It is found in the apical cell membrane. It carries out the reaction 2 Na(+)(out) + phosphate(out) = 2 Na(+)(in) + phosphate(in). Involved in actively transporting phosphate into cells via Na(+) cotransport in the renal brush border membrane. The cotransport has a Na(+):Pi stoichiometry of 2:1 and is electroneutral. This Homo sapiens (Human) protein is Sodium-dependent phosphate transport protein 2C (SLC34A3).